A 2167-amino-acid chain; its full sequence is SH3 and multiple ankyrin repeat domains protein 1 (2167 aa).

A disordered region spans residues 1 to 63; that stretch reads MTHSPATSED…TRGLQGRSMS (63 aa). Residues 17-32 are compositionally biased toward low complexity; it reads SECPEGGSESDSSPDG. Residues 33-47 are compositionally biased toward gly residues; the sequence is PGRGPQGTRGRGSGA. Position 43 is an omega-N-methylarginine (Arg-43). Tyr-186 is subject to Phosphotyrosine. ANK repeat units follow at residues 195 to 210, 212 to 245, 246 to 278, 279 to 312, 313 to 345, 346 to 378, and 379 to 395; these read VARL…YHDS, SGET…FRAR, DGMT…YKDR, RGLT…IADE, NGWQ…AQNA, SGNT…VKNN, and NGQT…NFEL. 2 disordered regions span residues 413 to 432 and 453 to 546; these read SPKY…TVPP and APGA…SRGR. Residues 453–479 show a composition bias toward low complexity; it reads APGASSSGTPGPTSGPQGQSQPSAPST. A compositionally biased stretch (gly residues) spans 527 to 542; it reads PAGGTGGSGGPGGSLG. Ser-540 is modified (phosphoserine). Position 544 is an omega-N-methylarginine (Arg-544). Positions 554–613 constitute an SH3 domain; that stretch reads VPGRSFMAVKSYQAQGEGEISLSKGEKIKVLSIGEGGFWEGQVKGRVGWFPSDCLEEVAN. 4 positions are modified to phosphoserine: Ser-638, Ser-641, Ser-671, and Ser-791. The PDZ domain maps to 663 to 757; the sequence is TVLLQKKDSE…TLMVKVVMVT (95 aa). The segment at 841 to 894 is disordered; it reads ISASESPGPGGLASLGKHRPKGFFATESSFDPHHRSQPSYDRPSFLPPGPGLML. Ser-898 carries the post-translational modification Phosphoserine. Disordered regions lie at residues 917 to 1233, 1245 to 1294, 1308 to 1417, 1429 to 1725, 1740 to 1787, 1842 to 1866, 1898 to 1988, and 2002 to 2029; these read SRSL…LDFT, RREG…SIDE, GGSS…VLRL, RAGL…AGVA, GQAF…DPVT, KLLP…QPQA, PWAR…STRH, and RRAP…LPIL. The span at 928–947 shows a compositional bias: pro residues; sequence IPPPPTTSPPEPPYSTPPAP. Residue Arg-958 is modified to Omega-N-methylarginine. Residues 964–980 are compositionally biased toward low complexity; that stretch reads PSSGGPLPASSPSSFDG. Over residues 1004 to 1028 the composition is skewed to basic residues; sequence AHHHPPHHHHHHAPPPQPHHHHAHP. Arg-1059 is modified (omega-N-methylarginine). Residues 1064 to 1085 are compositionally biased toward low complexity; the sequence is SPTSGAPSPSHHSSSGGSSGPT. An omega-N-methylarginine mark is found at Arg-1098 and Arg-1109. Low complexity-rich tracts occupy residues 1132-1146 and 1171-1184; these read SIPS…ALPR and STSS…GSST. Residues 1203 to 1224 show a composition bias toward pro residues; that stretch reads SPAPATSPVPPSPSPVPTPASP. Over residues 1245–1256 the composition is skewed to basic and acidic residues; sequence RREGGWQNEARR. Residue Arg-1257 is modified to Asymmetric dimethylarginine. Ser-1291 carries the post-translational modification Phosphoserine. Residues 1363 to 1372 show a composition bias toward basic and acidic residues; sequence ARERALKESS. Pro residues predominate over residues 1378 to 1395; it reads PQPPPRPPSPRYDAPPPT. Basic residues predominate over residues 1396–1408; the sequence is LHHHSPHSPHSPH. Residue Arg-1429 is modified to Omega-N-methylarginine. Ser-1442 bears the Phosphoserine mark. Composition is skewed to low complexity over residues 1459-1469 and 1530-1541; these read PGVGPLLLQLG and RRVLPTSPTSPR. The segment covering 1589–1615 has biased composition (pro residues); sequence PLTPGPPHPLPDPPSPATPLPAAPPPA. Polar residues predominate over residues 1624–1641; sequence DSTASSLTSYDSEVATLT. A compositionally biased stretch (pro residues) spans 1648–1676; sequence PGDPPAPGPPAPAAPAPPAPQPGPDPPPG. Residues 1684-1694 are compositionally biased toward basic and acidic residues; the sequence is VDSRSSSDHPL. Residues 1695–1708 are compositionally biased toward low complexity; sequence ETISSASTLSSLSA. The span at 1709–1724 shows a compositional bias: gly residues; that stretch reads EGGGNTGGVAGGGAGV. Residues 1850 to 1861 are compositionally biased toward pro residues; that stretch reads PGPPPPPLPGPL. An Omega-N-methylarginine modification is found at Arg-1901. Composition is skewed to low complexity over residues 1934 to 1945, 1960 to 1985, and 2002 to 2012; these read SQTSLLSKPSSS, TGSG…ASAS, and RRAPSPSLLPA. Omega-N-methylarginine is present on residues Arg-2022, Arg-2042, and Arg-2080. One can recognise an SAM domain in the interval 2104–2167; that stretch reads WTKFDVADWL…DRALKFFLER (64 aa).

The protein belongs to the SHANK family. May homomultimerize via its SAM domain. Interacts with the C-terminus of SSTR2 via the PDZ domain. Interacts with SHARPIN, SPTAN1 and DLGAP1/GKAP. Part of a complex with DLG4/PSD-95 and DLGAP1/GKAP. Interacts with BAIAP2. Interacts with IGSF9. Interacts with HOMER1 and HOMER3. In terms of tissue distribution, expressed only in brain (neuropil of cortex, CA1 region hippocampus and molecular layer of cerebellum).

The protein localises to the cytoplasm. Its subcellular location is the synapse. It is found in the postsynaptic density. Its function is as follows. Seems to be an adapter protein in the postsynaptic density (PSD) of excitatory synapses that interconnects receptors of the postsynaptic membrane including NMDA-type and metabotropic glutamate receptors, and the actin-based cytoskeleton. Plays a role in the structural and functional organization of the dendritic spine and synaptic junction. Overexpression promotes maturation of dendritic spines and the enlargement of spine heads via its ability to recruit Homer to postsynaptic sites, and enhances presynaptic function. The chain is SH3 and multiple ankyrin repeat domains protein 1 (Shank1) from Rattus norvegicus (Rat).